A 382-amino-acid polypeptide reads, in one-letter code: ATP phosphoribosyltransferase regulatory subunit (382 aa).

This sequence belongs to the class-II aminoacyl-tRNA synthetase family. HisZ subfamily. In terms of assembly, heteromultimer composed of HisG and HisZ subunits.

The protein localises to the cytoplasm. The protein operates within amino-acid biosynthesis; L-histidine biosynthesis; L-histidine from 5-phospho-alpha-D-ribose 1-diphosphate: step 1/9. Its function is as follows. Required for the first step of histidine biosynthesis. May allow the feedback regulation of ATP phosphoribosyltransferase activity by histidine. This Burkholderia lata (strain ATCC 17760 / DSM 23089 / LMG 22485 / NCIMB 9086 / R18194 / 383) protein is ATP phosphoribosyltransferase regulatory subunit.